The primary structure comprises 824 residues: Glycerol-3-phosphate acyltransferase (824 aa).

The short motif at 302 to 307 is the HXXXXD motif element; the sequence is CHRSHM.

Belongs to the GPAT/DAPAT family.

Its subcellular location is the cell inner membrane. The enzyme catalyses sn-glycerol 3-phosphate + an acyl-CoA = a 1-acyl-sn-glycero-3-phosphate + CoA. The protein operates within phospholipid metabolism; CDP-diacylglycerol biosynthesis; CDP-diacylglycerol from sn-glycerol 3-phosphate: step 1/3. This Actinobacillus pleuropneumoniae serotype 7 (strain AP76) protein is Glycerol-3-phosphate acyltransferase.